A 200-amino-acid polypeptide reads, in one-letter code: Large ribosomal subunit protein uL4 (200 aa).

The interval 43-71 is disordered; the sequence is RAQKTRAEVSGSGKKPWRQKGTGRARSGD.

Belongs to the universal ribosomal protein uL4 family. In terms of assembly, part of the 50S ribosomal subunit.

Its function is as follows. One of the primary rRNA binding proteins, this protein initially binds near the 5'-end of the 23S rRNA. It is important during the early stages of 50S assembly. It makes multiple contacts with different domains of the 23S rRNA in the assembled 50S subunit and ribosome. Forms part of the polypeptide exit tunnel. This is Large ribosomal subunit protein uL4 from Histophilus somni (strain 129Pt) (Haemophilus somnus).